The chain runs to 792 residues: LPS-assembly protein LptD (792 aa).

The first 22 residues, 1–22 (MYRVLRLLPLPLSVAISLSALA), serve as a signal peptide directing secretion.

This sequence belongs to the LptD family. As to quaternary structure, component of the lipopolysaccharide transport and assembly complex. Interacts with LptE and LptA.

It localises to the cell outer membrane. Together with LptE, is involved in the assembly of lipopolysaccharide (LPS) at the surface of the outer membrane. This Xylella fastidiosa (strain 9a5c) protein is LPS-assembly protein LptD.